A 314-amino-acid polypeptide reads, in one-letter code: Probable manganese-dependent inorganic pyrophosphatase (314 aa).

Histidine 7, aspartate 11, aspartate 13, aspartate 72, histidine 94, and aspartate 146 together coordinate Mn(2+).

It belongs to the PPase class C family. The cofactor is Mn(2+).

Its subcellular location is the cytoplasm. It carries out the reaction diphosphate + H2O = 2 phosphate + H(+). This chain is Probable manganese-dependent inorganic pyrophosphatase (ppaC), found in Deinococcus radiodurans (strain ATCC 13939 / DSM 20539 / JCM 16871 / CCUG 27074 / LMG 4051 / NBRC 15346 / NCIMB 9279 / VKM B-1422 / R1).